A 201-amino-acid polypeptide reads, in one-letter code: 3-isopropylmalate dehydratase small subunit (201 aa).

This sequence belongs to the LeuD family. LeuD type 1 subfamily. In terms of assembly, heterodimer of LeuC and LeuD.

It carries out the reaction (2R,3S)-3-isopropylmalate = (2S)-2-isopropylmalate. Its pathway is amino-acid biosynthesis; L-leucine biosynthesis; L-leucine from 3-methyl-2-oxobutanoate: step 2/4. Catalyzes the isomerization between 2-isopropylmalate and 3-isopropylmalate, via the formation of 2-isopropylmaleate. The polypeptide is 3-isopropylmalate dehydratase small subunit (Ruegeria sp. (strain TM1040) (Silicibacter sp.)).